The chain runs to 491 residues: ATP-dependent protease ATPase subunit HslU (491 aa).

Residues Ile34, 76–81, Asp296, Glu364, and Arg436 each bind ATP; that span reads GVGKTE.

Belongs to the ClpX chaperone family. HslU subfamily. In terms of assembly, a double ring-shaped homohexamer of HslV is capped on each side by a ring-shaped HslU homohexamer. The assembly of the HslU/HslV complex is dependent on binding of ATP.

Its subcellular location is the cytoplasm. Its function is as follows. ATPase subunit of a proteasome-like degradation complex; this subunit has chaperone activity. The binding of ATP and its subsequent hydrolysis by HslU are essential for unfolding of protein substrates subsequently hydrolyzed by HslV. HslU recognizes the N-terminal part of its protein substrates and unfolds these before they are guided to HslV for hydrolysis. The chain is ATP-dependent protease ATPase subunit HslU from Chlorobaculum tepidum (strain ATCC 49652 / DSM 12025 / NBRC 103806 / TLS) (Chlorobium tepidum).